We begin with the raw amino-acid sequence, 299 residues long: ATP synthase gamma chain (299 aa).

Belongs to the ATPase gamma chain family. In terms of assembly, F-type ATPases have 2 components, CF(1) - the catalytic core - and CF(0) - the membrane proton channel. CF(1) has five subunits: alpha(3), beta(3), gamma(1), delta(1), epsilon(1). CF(0) has three main subunits: a, b and c.

The protein resides in the cell inner membrane. Produces ATP from ADP in the presence of a proton gradient across the membrane. The gamma chain is believed to be important in regulating ATPase activity and the flow of protons through the CF(0) complex. This Rhodospirillum rubrum protein is ATP synthase gamma chain.